The primary structure comprises 335 residues: Putative SWIB domain-containing protein R508 (335 aa).

A compositionally biased stretch (basic residues) spans 1-12; the sequence is MSKRVTSSKKSK. The segment at 1-182 is disordered; sequence MSKRVTSSKK…NKKSPKKLLN (182 aa). Low complexity predominate over residues 24–33; the sequence is KNLSKTSKSV. The segment covering 60 to 75 has biased composition (polar residues); sequence NIGGSKSSRTYNSEGS. The segment covering 83-109 has biased composition (basic and acidic residues); sequence SSKDSKVIKKNKQKVESSDSEKHSENK. Basic residues predominate over residues 110–126; that stretch reads SHKKSSKSSSISRKKPI. Residues 163–173 are compositionally biased toward basic and acidic residues; the sequence is KGEDNNDEKQN. Positions 181–217 form a coiled coil; it reads LNEKKISSESFDDKLNELREELRENYIRQKKIMNDIK. The SWIB/MDM2 domain maps to 244–326; it reads GFNKPQTVPQ…QTWLKKVYNE (83 aa).

The polypeptide is Putative SWIB domain-containing protein R508 (Acanthamoeba polyphaga mimivirus (APMV)).